Consider the following 567-residue polypeptide: Ribulokinase (567 aa).

It belongs to the ribulokinase family.

The enzyme catalyses D-ribulose + ATP = D-ribulose 5-phosphate + ADP + H(+). The catalysed reaction is L-ribulose + ATP = L-ribulose 5-phosphate + ADP + H(+). The protein operates within carbohydrate degradation; L-arabinose degradation via L-ribulose; D-xylulose 5-phosphate from L-arabinose (bacterial route): step 2/3. The chain is Ribulokinase from Vibrio parahaemolyticus serotype O3:K6 (strain RIMD 2210633).